We begin with the raw amino-acid sequence, 331 residues long: Glyoxylate reductase (331 aa).

NADP(+) contacts are provided by residues 158–161, 180–182, and 239–241; these read FGRI, SRT, and TSR. Active-site residues include arginine 241 and glutamate 270. The active-site Proton donor is histidine 288. 288-290 provides a ligand contact to NADP(+); the sequence is HIG.

It belongs to the D-isomer specific 2-hydroxyacid dehydrogenase family. GyaR subfamily. Homodimer.

Its subcellular location is the cytoplasm. It carries out the reaction glycolate + NAD(+) = glyoxylate + NADH + H(+). This Thermococcus litoralis (strain ATCC 51850 / DSM 5473 / JCM 8560 / NS-C) protein is Glyoxylate reductase.